We begin with the raw amino-acid sequence, 382 residues long: Ribosomal RNA large subunit methyltransferase G (382 aa).

The protein belongs to the methyltransferase superfamily. RlmG family.

Its subcellular location is the cytoplasm. It catalyses the reaction guanosine(1835) in 23S rRNA + S-adenosyl-L-methionine = N(2)-methylguanosine(1835) in 23S rRNA + S-adenosyl-L-homocysteine + H(+). Specifically methylates the guanine in position 1835 (m2G1835) of 23S rRNA. This chain is Ribosomal RNA large subunit methyltransferase G, found in Psychromonas ingrahamii (strain DSM 17664 / CCUG 51855 / 37).